Consider the following 119-residue polypeptide: Large ribosomal subunit protein bL20 (119 aa).

It belongs to the bacterial ribosomal protein bL20 family.

Functionally, binds directly to 23S ribosomal RNA and is necessary for the in vitro assembly process of the 50S ribosomal subunit. It is not involved in the protein synthesizing functions of that subunit. In Chloroflexus aggregans (strain MD-66 / DSM 9485), this protein is Large ribosomal subunit protein bL20.